The chain runs to 109 residues: Large ribosomal subunit protein uL22 (109 aa).

Positions 84–95 are enriched in basic residues; it reads ARGTASRIRKPT. The tract at residues 84–109 is disordered; it reads ARGTASRIRKPTSHIMVEVSKPSKEA.

It belongs to the universal ribosomal protein uL22 family. As to quaternary structure, part of the 50S ribosomal subunit.

In terms of biological role, this protein binds specifically to 23S rRNA; its binding is stimulated by other ribosomal proteins, e.g. L4, L17, and L20. It is important during the early stages of 50S assembly. It makes multiple contacts with different domains of the 23S rRNA in the assembled 50S subunit and ribosome. The globular domain of the protein is located near the polypeptide exit tunnel on the outside of the subunit, while an extended beta-hairpin is found that lines the wall of the exit tunnel in the center of the 70S ribosome. This is Large ribosomal subunit protein uL22 from Campylobacter hominis (strain ATCC BAA-381 / DSM 21671 / CCUG 45161 / LMG 19568 / NCTC 13146 / CH001A).